A 218-amino-acid polypeptide reads, in one-letter code: Thiopurine S-methyltransferase (218 aa).

4 residues coordinate S-adenosyl-L-methionine: W10, L45, E66, and R123.

The protein belongs to the class I-like SAM-binding methyltransferase superfamily. TPMT family.

It is found in the cytoplasm. The enzyme catalyses S-adenosyl-L-methionine + a thiopurine = S-adenosyl-L-homocysteine + a thiopurine S-methylether.. This chain is Thiopurine S-methyltransferase, found in Pseudomonas aeruginosa (strain UCBPP-PA14).